The sequence spans 217 residues: Elongation factor Ts (217 aa).

The interval Thr80 to Val83 is involved in Mg(2+) ion dislocation from EF-Tu.

Belongs to the EF-Ts family.

It is found in the cytoplasm. Its function is as follows. Associates with the EF-Tu.GDP complex and induces the exchange of GDP to GTP. It remains bound to the aminoacyl-tRNA.EF-Tu.GTP complex up to the GTP hydrolysis stage on the ribosome. The chain is Elongation factor Ts from Carboxydothermus hydrogenoformans (strain ATCC BAA-161 / DSM 6008 / Z-2901).